We begin with the raw amino-acid sequence, 1206 residues long: MTSLRPLETSLSIGGRPRRGLVLPPPGVGAGVLLRRGAMALPGRRGFACRGRSAASAAERTKEKKRRDSSKQPLVHLQVCLEHQVKFGEHVGIIGSTKELGSWEEQVELEWTTNGWVCQLKLPGETLVEFKFVIFLVGGKDKIWEDGNNRVVELPKDGKFDIVCHWNRTEEPLELLGTPKFELVGEAEKNTGEDASASVTFAPEKVQDISVVENGDPAPEAESSKFGGQWQGSKTVFMRSNEHLNKEADRMWDTTGLDGIALKLVEGDKASRNWWRKLEVVRGILSESFDDQSRLGALVYSAIYLKWIYTGQISCFEDGGHHRPNKHAEISRQIFRELEMMYYGKTTSAKDVLVIRKIHPFLPSFKSEFTASVPLTRIRDIAHRNDIPHDLKQEIKHTIQNKLHRNAGPEDLIATEVMLARITKTPGEYSETFVEQFTIFYSELKDFFNAGSLFEQLESIKESLNESGLEVLSSFVETKRSLDQVDHAEDLDKNDTIQILMTTLQSLSSLRSVLMKGLESGLRNDAPDNAIAMRQKWRLCEISLEDYSFVLLSRFINTLEALGGSASLAKDVARNTTLWDTTLDALVIGINQVSFSGWKTDECIAIGNEILSWKQKGLSESEGCEDGKYIWSLRLKATLDRARRLTEEYSEALLSIFPEKVMVIGKALGIPDNSVRTYTEAEIRAGIVFQVSKLCTVLQKAIREVLGSTGWDVLVPGVAHGTLMRVERILPGSLPSSVKEPVVLIVDKADGDEEVKAAGDNIVGVILLQELPHLSHLGVRARQENVVFVTCEYDDTVTDVYLLEGKYIRLEASSINVNLSIVSEKNDNAVSTEPNSTGNPFQQKLQNEFSLPSDIEMPLQMSKQKSKSGVNGSFAALELSEASVESAGAKAAACRTLSVLASLSNKVYSDQGVPAAFRVPSGAVIPFGSMEDALKKSGSLESFTSLLEKIETAKVENGEVDSLALELQAIISHLSPPEETIIFLKRIFPQDVRLIVRSSANVEDLAGMSAAGLYDSIPNVSLMDPCAFGAAVGKVWASLYTRRAILSRRAAGVYQRDATMAVLVQEILQPDLSFVLHTVCPADHDPKVVQAEVAPGLGETLASGTRGTPWRLSCNKFDGKVATLAFSNFSEEMVVHNSGPANGEVIRLTVDYSKKPLSVDTTFRKQFGQRLAAIGQYLEQKFGSAQDVEGCLVGKDIFIVQSRPQP.

Disordered regions lie at residues 1–20 (MTSLRPLETSLSIGGRPRRG) and 52–71 (RSAASAAERTKEKKRRDSSK). The transit peptide at 1-56 (MTSLRPLETSLSIGGRPRRGLVLPPPGVGAGVLLRRGAMALPGRRGFACRGRSAAS) directs the protein to the chloroplast. Residues 67–168 (RDSSKQPLVH…KFDIVCHWNR (102 aa)) form the CBM20 domain. Catalysis depends on His776, which acts as the Tele-phosphohistidine intermediate.

The protein belongs to the PEP-utilizing enzyme family. As to quaternary structure, homodimer. Requires Mg(2+) as cofactor.

It is found in the plastid. Its subcellular location is the chloroplast. The enzyme catalyses [(1-&gt;4)-6-phospho-alpha-D-glucosyl](n) + n ATP + n H2O = [(1-&gt;4)-3,6-bisphospho-alpha-D-glucosyl](n) + n AMP + n phosphate + 2n H(+). Functionally, mediates the incorporation of phosphate into starch-like phospho-alpha-glucan, mostly at the C-3 position of glucose units. May be required for starch degradation, suggesting that the phosphate content of starch regulates its degradability. The chain is Phosphoglucan, water dikinase, chloroplastic (GWD3) from Oryza sativa subsp. japonica (Rice).